Here is a 581-residue protein sequence, read N- to C-terminus: Penicillin-binding protein activator LpoA (581 aa).

The first 26 residues, 1 to 26, serve as a signal peptide directing secretion; that stretch reads MLSILMQGLRLKKCFLPILVMFFLAG. Cys27 carries the N-palmitoyl cysteine lipid modification. The S-diacylglycerol cysteine moiety is linked to residue Cys27.

This sequence belongs to the LpoA family. In terms of assembly, interacts with PBP1a.

It is found in the cell outer membrane. In terms of biological role, regulator of peptidoglycan synthesis that is essential for the function of penicillin-binding protein 1A (PBP1a). In Histophilus somni (strain 129Pt) (Haemophilus somnus), this protein is Penicillin-binding protein activator LpoA.